Reading from the N-terminus, the 349-residue chain is MKLSHFQFNLPDELLAEYPAENRDESRLMVVNRAKGTIEHKMFKDVLDYFDEGDVLVLNNTKVFPARLYGNKEKTGARIEVFLLRELNAEQRLWDVLVDPARKIRIGNKLYFGDDDSLVAEVIDNTTSRGRTLRFLYDGSYEEFRNKLTELGETPIPKYISREVTPEDAERYQTIYAKEEGAVAAPTAGLHFSKHLMKRLEIKGIQFAEVTLHVGLGTFNPVEVEDLSKHKMDSEELKITQEACDIVNAAKERKSRICAVGTTSMRAIESSVSSARTLNPYDGWTNKFIFPPHDFSLATCMITNFHTPKSTLMMMISAFCGHDLMKEAYAEAIKEKYKFYSYGDAMLII.

Belongs to the QueA family. Monomer.

The protein resides in the cytoplasm. It catalyses the reaction 7-aminomethyl-7-carbaguanosine(34) in tRNA + S-adenosyl-L-methionine = epoxyqueuosine(34) in tRNA + adenine + L-methionine + 2 H(+). The protein operates within tRNA modification; tRNA-queuosine biosynthesis. Functionally, transfers and isomerizes the ribose moiety from AdoMet to the 7-aminomethyl group of 7-deazaguanine (preQ1-tRNA) to give epoxyqueuosine (oQ-tRNA). This chain is S-adenosylmethionine:tRNA ribosyltransferase-isomerase, found in Flavobacterium psychrophilum (strain ATCC 49511 / DSM 21280 / CIP 103535 / JIP02/86).